Here is a 1065-residue protein sequence, read N- to C-terminus: WD repeat-containing protein on Y chromosome (1065 aa).

WD repeat units follow at residues 153–197, 326–365, 369–408, 459–498, 511–550, 598–638, 745–784, and 828–867; these read EEVT…IRTA, RVPL…EPSA, GHNG…LLQT, THAA…RKII, IIDI…VVRN, FHTD…RRYS, KTGD…VPEA, and AHLK…LGTL. Residues 915–925 are compositionally biased toward basic and acidic residues; the sequence is PAKRAEVKAPE. Disordered regions lie at residues 915-936 and 1024-1065; these read PAKR…QTDD and GSAL…QQSE. Acidic residues predominate over residues 926–936; the sequence is DRDEETAQTDD.

The sequence is that of WD repeat-containing protein on Y chromosome from Drosophila persimilis (Fruit fly).